We begin with the raw amino-acid sequence, 249 residues long: Flavodoxin/ferredoxin--NADP reductase (249 aa).

One can recognise an FAD-binding FR-type domain in the interval asparagine 2–asparagine 102. FAD contacts are provided by residues arginine 51–serine 54, tyrosine 67, glutamine 75–threonine 77, and threonine 117. Residues valine 144–arginine 145, serine 174–arginine 175, arginine 185, and asparagine 215–aspartate 217 contribute to the NADP(+) site. Tyrosine 248 to tryptophan 249 contacts FAD.

The protein belongs to the ferredoxin--NADP reductase type 1 family. FAD serves as cofactor.

The protein localises to the cytoplasm. The enzyme catalyses 2 reduced [2Fe-2S]-[ferredoxin] + NADP(+) + H(+) = 2 oxidized [2Fe-2S]-[ferredoxin] + NADPH. It carries out the reaction reduced [flavodoxin] + NADP(+) = oxidized [flavodoxin] + NADPH + 2 H(+). Its function is as follows. Transports electrons between flavodoxin or ferredoxin and NADPH. The chain is Flavodoxin/ferredoxin--NADP reductase (fpr) from Buchnera aphidicola subsp. Baizongia pistaciae (strain Bp).